A 572-amino-acid chain; its full sequence is Proline--tRNA ligase (572 aa).

The protein belongs to the class-II aminoacyl-tRNA synthetase family. ProS type 1 subfamily. As to quaternary structure, homodimer.

Its subcellular location is the cytoplasm. It carries out the reaction tRNA(Pro) + L-proline + ATP = L-prolyl-tRNA(Pro) + AMP + diphosphate. Catalyzes the attachment of proline to tRNA(Pro) in a two-step reaction: proline is first activated by ATP to form Pro-AMP and then transferred to the acceptor end of tRNA(Pro). As ProRS can inadvertently accommodate and process non-cognate amino acids such as alanine and cysteine, to avoid such errors it has two additional distinct editing activities against alanine. One activity is designated as 'pretransfer' editing and involves the tRNA(Pro)-independent hydrolysis of activated Ala-AMP. The other activity is designated 'posttransfer' editing and involves deacylation of mischarged Ala-tRNA(Pro). The misacylated Cys-tRNA(Pro) is not edited by ProRS. The sequence is that of Proline--tRNA ligase from Escherichia coli O139:H28 (strain E24377A / ETEC).